A 324-amino-acid chain; its full sequence is 4-hydroxy-3-methylbut-2-enyl diphosphate reductase (324 aa).

Cys-28 contacts [4Fe-4S] cluster. (2E)-4-hydroxy-3-methylbut-2-enyl diphosphate contacts are provided by His-57 and His-90. Residues His-57 and His-90 each contribute to the dimethylallyl diphosphate site. The isopentenyl diphosphate site is built by His-57 and His-90. Cys-112 contacts [4Fe-4S] cluster. His-140 lines the (2E)-4-hydroxy-3-methylbut-2-enyl diphosphate pocket. His-140 lines the dimethylallyl diphosphate pocket. His-140 is an isopentenyl diphosphate binding site. Glu-142 serves as the catalytic Proton donor. Thr-180 serves as a coordination point for (2E)-4-hydroxy-3-methylbut-2-enyl diphosphate. Cys-210 serves as a coordination point for [4Fe-4S] cluster. (2E)-4-hydroxy-3-methylbut-2-enyl diphosphate-binding residues include Ser-238, Ser-239, Asn-240, and Ser-282. Positions 238, 239, 240, and 282 each coordinate dimethylallyl diphosphate. Residues Ser-238, Ser-239, Asn-240, and Ser-282 each contribute to the isopentenyl diphosphate site.

It belongs to the IspH family. [4Fe-4S] cluster serves as cofactor.

It catalyses the reaction isopentenyl diphosphate + 2 oxidized [2Fe-2S]-[ferredoxin] + H2O = (2E)-4-hydroxy-3-methylbut-2-enyl diphosphate + 2 reduced [2Fe-2S]-[ferredoxin] + 2 H(+). It carries out the reaction dimethylallyl diphosphate + 2 oxidized [2Fe-2S]-[ferredoxin] + H2O = (2E)-4-hydroxy-3-methylbut-2-enyl diphosphate + 2 reduced [2Fe-2S]-[ferredoxin] + 2 H(+). Its pathway is isoprenoid biosynthesis; dimethylallyl diphosphate biosynthesis; dimethylallyl diphosphate from (2E)-4-hydroxy-3-methylbutenyl diphosphate: step 1/1. It functions in the pathway isoprenoid biosynthesis; isopentenyl diphosphate biosynthesis via DXP pathway; isopentenyl diphosphate from 1-deoxy-D-xylulose 5-phosphate: step 6/6. Its function is as follows. Catalyzes the conversion of 1-hydroxy-2-methyl-2-(E)-butenyl 4-diphosphate (HMBPP) into a mixture of isopentenyl diphosphate (IPP) and dimethylallyl diphosphate (DMAPP). Acts in the terminal step of the DOXP/MEP pathway for isoprenoid precursor biosynthesis. The sequence is that of 4-hydroxy-3-methylbut-2-enyl diphosphate reductase from Ralstonia nicotianae (strain ATCC BAA-1114 / GMI1000) (Ralstonia solanacearum).